Consider the following 463-residue polypeptide: Quinolone resistance protein NorB (463 aa).

A run of 14 helical transmembrane segments spans residues 17–37, 53–73, 86–106, 107–127, 142–162, 165–185, 201–221, 230–250, 273–293, 299–319, 334–354, 357–377, 403–423, and 435–455; these read IGIVLSVITFWLFAQSLVNVV, IAVSITALFSGMFVVGAGGLA, IILNILGSLLIIISNIPLLLI, IGRLIQGLSAACIMPATLSII, YWSIGSWGGSGVCSFFGGAVA, LGWRWIFILSIIISLIALFLI, FDIKGLVLLVIMLLSLNILIT, SLLFITLLAIAIGSFSLFIVL, TASNFLLNGVAGTLIVANTFV, YSSLQAGSLSITYLVMVLIMI, PMLIGTGVLIVGECLISLTFL, IFYVICCIIGYLFFGLGLGIY, MASALGGAFGVALSGAVYAIV, and IALWLNAGMGILSFVIILLLV.

The protein belongs to the major facilitator superfamily. TCR/Tet family.

The protein localises to the cell membrane. Multidrug efflux pump that acts independently of NorA and is one of the factors that confers resistance against diverse quinolones and chemical compounds. The chain is Quinolone resistance protein NorB (norB) from Staphylococcus aureus (strain USA300).